We begin with the raw amino-acid sequence, 2525 residues long: Highly reducing polyketide synthase cm3B (2525 aa).

Over residues 1 to 10 (MQSDTNNSPL) the composition is skewed to polar residues. The segment at 1-29 (MQSDTNNSPLSWEELRSGAASSDANSSPP) is disordered. The Ketosynthase family 3 (KS3) domain maps to 29 to 450 (PEPIAIIGMS…GTNAHVVVDA (422 aa)). Residues C202, H336, and H376 each act as for beta-ketoacyl synthase activity in the active site. Residues 560 to 895 (VFSGQGSQYA…FLECLGALHV (336 aa)) are malonyl-CoA:ACP transacylase (MAT) domain. The tract at residues 949–1087 (HELLGTFAHD…GLVHAETQAA (139 aa)) is N-terminal hotdog fold. The tract at residues 949-1252 (HELLGTFAHD…AKGVHTTTLP (304 aa)) is dehydratase (DH) domain. One can recognise a PKS/mFAS DH domain in the interval 949 to 1257 (HELLGTFAHD…TTTLPGDTGL (309 aa)). The active-site Proton acceptor; for dehydratase activity is the H981. The C-terminal hotdog fold stretch occupies residues 1107–1257 (VHEVTPQKLY…TTTLPGDTGL (151 aa)). The active-site Proton donor; for dehydratase activity is the D1169. Positions 1399–1504 (LEVGAGTASA…KKLLKPGGKF (106 aa)) are methyltransferase (CMet) domain. The tract at residues 1799 to 2111 (GLLESIRWKD…AGKHTGKIVL (313 aa)) is enoyl reductase (ER) domain. The region spanning 2411–2489 (AQLLENISQL…ELAKIIAKES (79 aa)) is the Carrier domain. A ketoreductase (KR) domain region spans residues 2411–2489 (AQLLENISQL…ELAKIIAKES (79 aa)). Residue S2449 is modified to O-(pantetheine 4'-phosphoryl)serine.

Its pathway is secondary metabolite biosynthesis. Its function is as follows. Highly reducing polyketide synthase; part of the gene cluster that mediates the biosynthesis of beauveriolides I and III, cyclodepsipeptides acting as inhibitors of the acyl-CoA:cholesterol acyltransferase. The HR-PKS cm3B initiates the biosynthesis of beauveriolides by iteratively catalyzing the formation of the linear polyketide chain. The ATP-dependent acetyl-CoA ligase cm3D converts the polyketide carboxylic acid to a CoA thioester which id shuttled to the first T domain in the NRPS cm3A by the acetyltransferase cm3C. Cm3A contains 13 domains and assembles the polyketide chain, L-phenylalanine, L-alanine, and D-leucine (or D-allo-isoleucine) to form beauveriolide I (or beauveriolide III). The production of both beauveriolides I and III suggests the substrate adaptability of cm3B, using different amino acids as substrates. This is Highly reducing polyketide synthase cm3B from Cordyceps militaris (strain CM01) (Caterpillar fungus).